A 648-amino-acid chain; its full sequence is Wilms tumor protein 1-interacting protein homolog (648 aa).

3 disordered regions span residues 27 to 56, 142 to 291, and 306 to 327; these read DGMY…KVYS, SNSL…SPRS, and SPRS…GSMS. Composition is skewed to low complexity over residues 158–171 and 178–192; these read SPRS…SSQD and PRSS…LVSP. Polar residues-rich tracts occupy residues 197–213 and 220–241; these read GTSV…TASD and PRTS…TSGI. Over residues 252-267 the composition is skewed to low complexity; that stretch reads PRSSTTSPRSSYSDSR. 3 LIM zinc-binding domains span residues 437-498, 502-561, and 562-631; these read GICV…SGFQ, EKCF…TVFA, and PKCA…RLKT.

It belongs to the zyxin/ajuba family.

It is found in the cell junction. It localises to the adherens junction. The protein localises to the nucleus. Functionally, may monitor slit diaphragm protein assembly, a specialized adherens junction characteristic of podocytes. In case of podocyte injury, it shuttles into the nucleus and acts as a transcription regulator. Plays a role in the regulation of cell morphology and cytoskeletal organization. Acts as a transcriptional corepressor for snai1 and snai2/slug and plays a role in regulating neural crest development. This chain is Wilms tumor protein 1-interacting protein homolog (wtip), found in Danio rerio (Zebrafish).